The primary structure comprises 401 residues: 3-oxoadipyl-CoA/3-oxo-5,6-dehydrosuberyl-CoA thiolase (401 aa).

Cys90 acts as the Acyl-thioester intermediate in catalysis. Residues His357 and Cys387 each act as proton acceptor in the active site.

Belongs to the thiolase-like superfamily. Thiolase family.

The catalysed reaction is succinyl-CoA + acetyl-CoA = 3-oxoadipyl-CoA + CoA. The enzyme catalyses 2,3-didehydroadipoyl-CoA + acetyl-CoA = 3-oxo-5,6-didehydrosuberyl-CoA + CoA. It functions in the pathway aromatic compound metabolism; phenylacetate degradation. Functionally, catalyzes the thiolytic cleavage of the beta-keto C8 intermediate 3-oxo-5,6-dehydrosuberyl-CoA with CoA to yield the C6 intermediate 2,3-dehydroadipyl-CoA and acetyl-CoA. Besides it catalyzes also the last step of the pathway, in which 3-oxoadipyl-CoA similarly is cleaved to acetyl-CoA and succinyl-CoA. The protein is 3-oxoadipyl-CoA/3-oxo-5,6-dehydrosuberyl-CoA thiolase (paaJ) of Escherichia coli (strain K12).